The sequence spans 616 residues: Schwannomin-interacting protein 1 homolog (616 aa).

A compositionally biased stretch (acidic residues) spans 38-50; the sequence is ESDLTDSDREDDP. Disordered stretches follow at residues 38–71, 204–251, and 292–320; these read ESDL…GQDS, LKQT…PDTF, and SSLE…YSNQ. Polar residues-rich tracts occupy residues 62–71 and 204–217; these read SETFKNGQDS and LKQT…GNST. The stretch at 550–594 forms a coiled coil; sequence LQLLVNNLQEYIENLNVTLLESLKERDDLNSDQDDILHDLEKINN.

It belongs to the SCHIP1 family. As to quaternary structure, interacts with ex; the interaction results in recruitment of Schip1 to the apical cell membrane. Interacts with Tao; the interaction enhances Tao kinase activity. Interacts with Mer. As to expression, in eye disks of the third instar larvae, expressed in all cells (at protein level).

The protein resides in the cell junction. It localises to the adherens junction. It is found in the apical cell membrane. Regulator of the Hippo/SWH (Sav/Wts/Hpo) signaling pathway, a signaling pathway that plays a pivotal role in organ size control and tumor suppression by restricting proliferation and promoting apoptosis. The core of this pathway is composed of a kinase cascade wherein Hippo (hpo), in complex with its regulatory protein Salvador (sav), phosphorylates and activates Warts (wts) in complex with its regulatory protein Mats, which in turn phosphorylates and inactivates the Yorkie (yki) oncoprotein. Schip1 promotes kinase activity of Tao and enhances phosphorylation of hpo by Tao. The polypeptide is Schwannomin-interacting protein 1 homolog (Drosophila melanogaster (Fruit fly)).